Reading from the N-terminus, the 603-residue chain is UvrABC system protein C (603 aa).

The GIY-YIG domain occupies 15-92 (DQPGCYLMKD…IKKHDPRFNI (78 aa)). In terms of domain architecture, UVR spans 197-232 (KTVKNDLMKKMQEAAENMEFEKAGEFRDQINAIETT).

It belongs to the UvrC family. In terms of assembly, interacts with UvrB in an incision complex.

It is found in the cytoplasm. The UvrABC repair system catalyzes the recognition and processing of DNA lesions. UvrC both incises the 5' and 3' sides of the lesion. The N-terminal half is responsible for the 3' incision and the C-terminal half is responsible for the 5' incision. The polypeptide is UvrABC system protein C (Listeria monocytogenes serotype 4a (strain HCC23)).